The following is a 420-amino-acid chain: Phosphoglycerate kinase (420 aa).

(2R)-3-phosphoglycerate contacts are provided by valine 26, aspartate 27, tyrosine 28, asparagine 29, glutamine 42, arginine 43, serine 66, histidine 67, glycine 69, arginine 70, leucine 125, arginine 126, histidine 173, and arginine 174. Tyrosine 199 bears the Phosphotyrosine mark. Phosphoserine is present on serine 206. Residues lysine 209–glutamate 228 form a calmodulin binding region. An ADP-binding site is contributed by glycine 217. Residue glycine 217 participates in CDP binding. The AMP site is built by alanine 218 and lysine 219. Alanine 218 contacts ATP. Alanine 218 serves as a coordination point for Mg(2+). Aspartate 222 is a binding site for CDP. Aspartate 222 serves as a coordination point for Mg(2+). Lysine 223 provides a ligand contact to AMP. Lysine 223 is a binding site for ATP. Glycine 241 contributes to the ADP binding site. Glycine 241 contacts CDP. AMP-binding residues include glycine 242 and glycine 316. Positions 242 and 316 each coordinate ATP. Positions 341 and 346 each coordinate CDP. An ADP-binding site is contributed by phenylalanine 346. Glutamate 347 lines the AMP pocket. ATP is bound by residues glutamate 347, aspartate 378, and threonine 379. Mg(2+) is bound at residue aspartate 378. Serine 393 carries the phosphoserine modification.

The protein belongs to the phosphoglycerate kinase family. In terms of assembly, monomer. Interacts with calmodulin in the presence of Ca(2+). Mg(2+) is required as a cofactor.

The protein localises to the cytoplasm. It catalyses the reaction (2R)-3-phosphoglycerate + ATP = (2R)-3-phospho-glyceroyl phosphate + ADP. It functions in the pathway carbohydrate degradation; glycolysis; pyruvate from D-glyceraldehyde 3-phosphate: step 2/5. In Dictyostelium discoideum (Social amoeba), this protein is Phosphoglycerate kinase.